We begin with the raw amino-acid sequence, 173 residues long: Calcium-binding protein 5 (173 aa).

EF-hand domains follow at residues 28-63, 82-99, 105-140, and 142-173; these read DELD…MGYM, GRVD…KLLA, IGVQ…LLGE, and LTPR…MMSR. 4 residues coordinate Ca(2+): Asp-41, Asp-43, Asp-45, and Asp-52. Ca(2+)-binding residues include Asp-118, Asn-120, Asp-122, Glu-124, Glu-129, Asp-155, Asn-157, Asp-159, Thr-161, and Glu-166.

In terms of assembly, interacts with CACNA1C (via C-terminal CDB motif) in a calcium-dependent manner. Interacts with STXBP1. Interacts with MYO6. Expressed in inner and outer plexiform layers of the retina, and retinal bipolar cells (at protein level). Expressed in the inner hair cells (IHC) of the cochlea.

It is found in the cytoplasm. Its function is as follows. Inhibits calcium-dependent inactivation of L-type calcium channel and shifts voltage dependence of activation to more depolarized membrane potentials. Involved in the transmission of light signals. May positively regulate neurotransmitter vesicle endocytosis and exocytosis in a salt-dependent manner. May play a role in the extension and network organization of neurites. This is Calcium-binding protein 5 (Cabp5) from Mus musculus (Mouse).